A 473-amino-acid chain; its full sequence is Siroheme synthase (473 aa).

The interval 1–203 is precorrin-2 dehydrogenase /sirohydrochlorin ferrochelatase; sequence MQYLPIFTKL…GDTQAAEQQL (203 aa). NAD(+)-binding positions include 22 to 23 and 43 to 44; these read DV and PK. Phosphoserine is present on S128. Residues 215–473 form a uroporphyrinogen-III C-methyltransferase region; that stretch reads GEVYVVGAGP…SFAQPLTDVA (259 aa). P224 serves as a coordination point for S-adenosyl-L-methionine. D247 acts as the Proton acceptor in catalysis. The Proton donor role is filled by K269. Residues 300-302, I305, 330-331, M382, and G411 each bind S-adenosyl-L-methionine; these read GGD and TA.

This sequence in the N-terminal section; belongs to the precorrin-2 dehydrogenase / sirohydrochlorin ferrochelatase family. The protein in the C-terminal section; belongs to the precorrin methyltransferase family.

It catalyses the reaction uroporphyrinogen III + 2 S-adenosyl-L-methionine = precorrin-2 + 2 S-adenosyl-L-homocysteine + H(+). The catalysed reaction is precorrin-2 + NAD(+) = sirohydrochlorin + NADH + 2 H(+). The enzyme catalyses siroheme + 2 H(+) = sirohydrochlorin + Fe(2+). The protein operates within cofactor biosynthesis; adenosylcobalamin biosynthesis; precorrin-2 from uroporphyrinogen III: step 1/1. Its pathway is cofactor biosynthesis; adenosylcobalamin biosynthesis; sirohydrochlorin from precorrin-2: step 1/1. It functions in the pathway porphyrin-containing compound metabolism; siroheme biosynthesis; precorrin-2 from uroporphyrinogen III: step 1/1. It participates in porphyrin-containing compound metabolism; siroheme biosynthesis; siroheme from sirohydrochlorin: step 1/1. The protein operates within porphyrin-containing compound metabolism; siroheme biosynthesis; sirohydrochlorin from precorrin-2: step 1/1. In terms of biological role, multifunctional enzyme that catalyzes the SAM-dependent methylations of uroporphyrinogen III at position C-2 and C-7 to form precorrin-2 via precorrin-1. Then it catalyzes the NAD-dependent ring dehydrogenation of precorrin-2 to yield sirohydrochlorin. Finally, it catalyzes the ferrochelation of sirohydrochlorin to yield siroheme. The polypeptide is Siroheme synthase (Pseudoalteromonas translucida (strain TAC 125)).